The sequence spans 283 residues: ATP phosphoribosyltransferase (283 aa).

It belongs to the ATP phosphoribosyltransferase family. Long subfamily. Mg(2+) is required as a cofactor.

It is found in the cytoplasm. It carries out the reaction 1-(5-phospho-beta-D-ribosyl)-ATP + diphosphate = 5-phospho-alpha-D-ribose 1-diphosphate + ATP. It functions in the pathway amino-acid biosynthesis; L-histidine biosynthesis; L-histidine from 5-phospho-alpha-D-ribose 1-diphosphate: step 1/9. With respect to regulation, feedback inhibited by histidine. Its function is as follows. Catalyzes the condensation of ATP and 5-phosphoribose 1-diphosphate to form N'-(5'-phosphoribosyl)-ATP (PR-ATP). Has a crucial role in the pathway because the rate of histidine biosynthesis seems to be controlled primarily by regulation of HisG enzymatic activity. The protein is ATP phosphoribosyltransferase of Ignicoccus hospitalis (strain KIN4/I / DSM 18386 / JCM 14125).